A 464-amino-acid polypeptide reads, in one-letter code: Asparagine--tRNA ligase (464 aa).

It belongs to the class-II aminoacyl-tRNA synthetase family. Homodimer.

The protein localises to the cytoplasm. It catalyses the reaction tRNA(Asn) + L-asparagine + ATP = L-asparaginyl-tRNA(Asn) + AMP + diphosphate + H(+). In Cytophaga hutchinsonii (strain ATCC 33406 / DSM 1761 / CIP 103989 / NBRC 15051 / NCIMB 9469 / D465), this protein is Asparagine--tRNA ligase.